The following is a 337-amino-acid chain: Biotin synthase (337 aa).

A Radical SAM core domain is found at 58-283; the sequence is PEVEVEGIIS…RTILRFAGGR (226 aa). Residues Cys73, Cys77, and Cys80 each contribute to the [4Fe-4S] cluster site. [2Fe-2S] cluster is bound by residues Cys116, Cys149, Cys208, and Arg278.

The protein belongs to the radical SAM superfamily. Biotin synthase family. In terms of assembly, homodimer. It depends on [4Fe-4S] cluster as a cofactor. [2Fe-2S] cluster serves as cofactor.

The enzyme catalyses (4R,5S)-dethiobiotin + (sulfur carrier)-SH + 2 reduced [2Fe-2S]-[ferredoxin] + 2 S-adenosyl-L-methionine = (sulfur carrier)-H + biotin + 2 5'-deoxyadenosine + 2 L-methionine + 2 oxidized [2Fe-2S]-[ferredoxin]. It participates in cofactor biosynthesis; biotin biosynthesis; biotin from 7,8-diaminononanoate: step 2/2. Catalyzes the conversion of dethiobiotin (DTB) to biotin by the insertion of a sulfur atom into dethiobiotin via a radical-based mechanism. The chain is Biotin synthase from Rhodococcus jostii (strain RHA1).